Here is a 235-residue protein sequence, read N- to C-terminus: Venom metalloproteinase antarease-like TserMP_B (235 aa).

Residues Ile-4–Cys-233 enclose the Peptidase M12B domain. A disulfide bridge connects residues Cys-137 and Cys-228. His-161 contributes to the Zn(2+) binding site. Glu-162 is an active-site residue. Zn(2+)-binding residues include His-165 and His-171.

This sequence belongs to the venom metalloproteinase (M12B) family. Zn(2+) serves as cofactor. In terms of tissue distribution, expressed by the venom gland.

It is found in the secreted. Inhibited by EDTA. Functionally, acts as a metalloprotease. Penetrates intact tissue and specifically cleaves the vesicle-associated membrane protein 2 (VAMP2) (part of the SNARE complex) involved in pancreatic secretion, thus disrupting the normal vesicular traffic. This Tityus serrulatus (Brazilian scorpion) protein is Venom metalloproteinase antarease-like TserMP_B.